The following is a 1088-amino-acid chain: Methionine S-methyltransferase (1088 aa).

It belongs to the class I-like SAM-binding methyltransferase superfamily. As to quaternary structure, homotetramer.

The protein localises to the cytoplasm. The enzyme catalyses L-methionine + S-adenosyl-L-methionine = S-methyl-L-methionine + S-adenosyl-L-homocysteine. Catalyzes the S-methylmethionine (SMM) biosynthesis from adenosyl-L-homocysteine (AdoMet) and methionine. SMM biosynthesis (by MMT1) and degradation (by HMT-1, HMT-2 and HMT-3) constitute the SMM cycle in plants, which is probably required to achieve short term control of AdoMet level. Also able to catalyze the selenium-methylmethionine (SeMM) from AdoMet and selenium-methionine (SeMet). May play a role in phoem sulfur transport; such function is however not essential. The sequence is that of Methionine S-methyltransferase (MMT1) from Wollastonia biflora (Beach sunflower).